We begin with the raw amino-acid sequence, 417 residues long: MIEVLLVTICLAAFPYQGSSIILESGNVNDYEVVYPRKITALSEGAAQQKYEDTMQYEFKVNGEPVVLHLEKNKELFAKDYSETHYSPDGTRITTYPSVEDHCYYQGRIHNDADSTASISTCNGLKGHFKFHGERYFIEPLKLPGSEAHAVYKYENIEKEDETPKMCGVIQKWKSDELIKKPFRLNLTPQQQESPQAKVYLVIVADKSMVDKHNGNIKKIEEQGHQMVNTMNECYRPMGIIIIMAGIECWTTNDFFEVKSSAKETLYSFAKWRVEDLSKRKPHNDAQFLTNKDFDGNTVGLAFVGGICNEKYCAGVVQDHTKVPLLMAITMGHEIGHNLGMEHDEANCKCKACVMAPEVNNNPTKKFSDCSRNYYQKFLKDRKPECLFKKPLRTDTVSTPVSGNEPLEVITMDDFYA.

The first 20 residues, 1–20 (MIEVLLVTICLAAFPYQGSS), serve as a signal peptide directing secretion. The propeptide occupies 21-189 (IILESGNVND…KKPFRLNLTP (169 aa)). Positions 197–391 (AKVYLVIVAD…RKPECLFKKP (195 aa)) constitute a Peptidase M12B domain. Disulfide bonds link Cys-308/Cys-386, Cys-348/Cys-370, and Cys-350/Cys-353. His-333 contributes to the Zn(2+) binding site. Glu-334 is a catalytic residue. Zn(2+) contacts are provided by His-337 and His-343. A propeptide spanning residues 392–417 (LRTDTVSTPVSGNEPLEVITMDDFYA) is cleaved from the precursor.

This sequence belongs to the venom metalloproteinase (M12B) family. P-I subfamily. In terms of assembly, monomer. Zn(2+) is required as a cofactor. In terms of tissue distribution, expressed by the venom gland.

Its subcellular location is the secreted. Inhibited by EDTA, and O-phenanthrolene. Its function is as follows. Snake venom zinc metalloprotease that inhibits platelet aggregation by binding specifically to platelet glycoprotein VI (GP6) and platelet glycoprotein Ib alpha (GP1BA). It inhibits the interaction between collagen and platelet GP6 by cleaving GP6 (at '225-Glu-|-Ala-226' and '238-Val-|-Phe-239' bonds), and inhibits vWF-induced platelet aggregation by cleaving GP1BA and vWF. Cleavage of GP1BA occurs at two distinct sites to generate two soluble fragments. It also cleaves alpha- (FGA) and subsequently the gamma-chain (FGG) of fibrinogen, leaving the beta-chain unaffected. It also inhibits collagen-, convulxin- and ristocetin-induced platelet aggregation. It blocks the adhesion of platelet to immobilized collagen, but only exerts a slight inhibition to fibrinogen. In vivo, it exerts potent antithrombotic effect. The polypeptide is Snake venom metalloproteinase kistomin (Calloselasma rhodostoma (Malayan pit viper)).